We begin with the raw amino-acid sequence, 91 residues long: Acylphosphatase (91 aa).

Positions 3–91 (KLRMNVQGRV…EETEQFKVIQ (89 aa)) constitute an Acylphosphatase-like domain. Active-site residues include Arg18 and Asn36.

It belongs to the acylphosphatase family.

The enzyme catalyses an acyl phosphate + H2O = a carboxylate + phosphate + H(+). This Enterococcus faecalis (strain ATCC 700802 / V583) protein is Acylphosphatase (acyP).